A 101-amino-acid chain; its full sequence is ATP-dependent Clp protease adapter protein ClpS (101 aa).

It belongs to the ClpS family. In terms of assembly, binds to the N-terminal domain of the chaperone ClpA.

Functionally, involved in the modulation of the specificity of the ClpAP-mediated ATP-dependent protein degradation. The chain is ATP-dependent Clp protease adapter protein ClpS from Corynebacterium jeikeium (strain K411).